A 618-amino-acid polypeptide reads, in one-letter code: MTKKLPSELKQTRKSIQTACEFCHTKHIQCDVGRPCQNCLKRNIGKFCRDKKRKSRKRIEKHGTQPYLNLGKRLVIHDVPSKTVSPSSVHLQRDFLSSDQEKPGKTPAHNTNIQYTYNINDNFQSAGSIPRITNFNTNNGQTVLENTSNNISASQAVHLMNDPIIPTVRKSTLNLKSHFLEQHKAMQQPLATNCLVATSNVPVHSGMDDSNKSDDDVDDETNIHFDSMWCNDEYMKLKDIVDISTPFLPNNSQIFSLQESEYPNPSASTRGNSSLHLTNLLNSTKSVNDQKDSSIGHSTSTFNTYDEVVSRPFISLDMLHLNRGANANTHPSHNAKLESECDSSSHSDADLEKHDTDFISPSKFRELVKTPQDLYDNKCLIKPHNYKLAYTKLLTTLRKKFLEGAEIDKSASVKDEHSTQKHNLRYDLEVIIRSILERYAPIFISLTSNMIEEDLLLQEVTLQRALLDLENMAKLVSCTPMCIWRRSGEICFVSNEFYSLTGFNKNLLLDRTSFIFEYLDHKSVSNYFQIFNELLAFGYNDINKRKKLLMLNACSSTSSKITEGFSFTTDGKAIFTKCNLLLSNGLYLKCACCWTVKRDSFNIPILVMGQFLPIFEMD.

The zn(2)-C6 fungal-type DNA-binding region spans 20-48 (CEFCHTKHIQCDVGRPCQNCLKRNIGKFC). The tract at residues 325-352 (ANANTHPSHNAKLESECDSSSHSDADLE) is disordered. The span at 335 to 352 (AKLESECDSSSHSDADLE) shows a compositional bias: basic and acidic residues. Positions 466 to 538 (LLDLENMAKL…QIFNELLAFG (73 aa)) constitute a PAS domain.

Belongs to the ERT1/acuK family.

The protein localises to the nucleus. In terms of biological role, transcription factor which regulates nonfermentable carbon utilization. Binds specifically to 5'-CGGN(8)CGG-3' and 5'-CGGN(9)CGG-3' sequences in the promoter region. The polypeptide is Glucose starvation modulator protein 1 (GSM1) (Saccharomyces cerevisiae (strain RM11-1a) (Baker's yeast)).